Here is a 274-residue protein sequence, read N- to C-terminus: Imidazole glycerol phosphate synthase subunit HisF (274 aa).

Residues Asp11 and Asp134 contribute to the active site.

The protein belongs to the HisA/HisF family. Heterodimer of HisH and HisF.

It localises to the cytoplasm. The enzyme catalyses 5-[(5-phospho-1-deoxy-D-ribulos-1-ylimino)methylamino]-1-(5-phospho-beta-D-ribosyl)imidazole-4-carboxamide + L-glutamine = D-erythro-1-(imidazol-4-yl)glycerol 3-phosphate + 5-amino-1-(5-phospho-beta-D-ribosyl)imidazole-4-carboxamide + L-glutamate + H(+). It functions in the pathway amino-acid biosynthesis; L-histidine biosynthesis; L-histidine from 5-phospho-alpha-D-ribose 1-diphosphate: step 5/9. Its function is as follows. IGPS catalyzes the conversion of PRFAR and glutamine to IGP, AICAR and glutamate. The HisF subunit catalyzes the cyclization activity that produces IGP and AICAR from PRFAR using the ammonia provided by the HisH subunit. The chain is Imidazole glycerol phosphate synthase subunit HisF from Methanobrevibacter smithii (strain ATCC 35061 / DSM 861 / OCM 144 / PS).